The following is a 610-amino-acid chain: tRNA uridine 5-carboxymethylaminomethyl modification enzyme MnmG (610 aa).

14 to 19 (GAGHAG) is a binding site for FAD. 274–288 (GPRYCPSIEDKIVKF) is an NAD(+) binding site.

It belongs to the MnmG family. As to quaternary structure, homodimer. Heterotetramer of two MnmE and two MnmG subunits. The cofactor is FAD.

It is found in the cytoplasm. In terms of biological role, NAD-binding protein involved in the addition of a carboxymethylaminomethyl (cmnm) group at the wobble position (U34) of certain tRNAs, forming tRNA-cmnm(5)s(2)U34. The chain is tRNA uridine 5-carboxymethylaminomethyl modification enzyme MnmG from Chlamydia muridarum (strain MoPn / Nigg).